Consider the following 763-residue polypeptide: Photosystem I P700 chlorophyll a apoprotein A1 (763 aa).

A run of 8 helical transmembrane segments spans residues 72 to 95 (IFSA…FHGA), 158 to 181 (LYVT…FHYH), 197 to 221 (LNHH…HVSL), 305 to 323 (TAHH…GHMY), 360 to 383 (WHAQ…HHMY), 399 to 425 (LSLF…IFMV), 447 to 469 (AIIS…LYIH), and 544 to 562 (FMVH…LILL). [4Fe-4S] cluster-binding residues include Cys586 and Cys595. 2 consecutive transmembrane segments (helical) span residues 602 to 623 (HVFL…HYSW) and 677 to 699 (TSAY…MFLF). His688 serves as a coordination point for chlorophyll a'. Positions 696 and 704 each coordinate chlorophyll a. Phylloquinone is bound at residue Trp705. A helical transmembrane segment spans residues 737–757 (AVGVAHYLLGGIVTTWSFFLA).

Belongs to the PsaA/PsaB family. As to quaternary structure, the PsaA/B heterodimer binds the P700 chlorophyll special pair and subsequent electron acceptors. PSI consists of a core antenna complex that captures photons, and an electron transfer chain that converts photonic excitation into a charge separation. The cyanobacterial PSI reaction center is composed of one copy each of PsaA,B,C,D,E,F,I,J,K,L,M and X, and forms trimeric complexes. It depends on PSI electron transfer chain: 5 chlorophyll a, 1 chlorophyll a', 2 phylloquinones and 3 4Fe-4S clusters. PSI core antenna: 90 chlorophyll a, 22 carotenoids, 3 phospholipids and 1 galactolipid. P700 is a chlorophyll a/chlorophyll a' dimer, A0 is one or more chlorophyll a, A1 is one or both phylloquinones and FX is a shared 4Fe-4S iron-sulfur center. as a cofactor.

It localises to the cellular thylakoid membrane. It catalyses the reaction reduced [plastocyanin] + hnu + oxidized [2Fe-2S]-[ferredoxin] = oxidized [plastocyanin] + reduced [2Fe-2S]-[ferredoxin]. Functionally, psaA and PsaB bind P700, the primary electron donor of photosystem I (PSI), as well as the electron acceptors A0, A1 and FX. PSI is a plastocyanin/cytochrome c6-ferredoxin oxidoreductase, converting photonic excitation into a charge separation, which transfers an electron from the donor P700 chlorophyll pair to the spectroscopically characterized acceptors A0, A1, FX, FA and FB in turn. Oxidized P700 is reduced on the lumenal side of the thylakoid membrane by plastocyanin or cytochrome c6. The sequence is that of Photosystem I P700 chlorophyll a apoprotein A1 from Synechococcus elongatus (strain ATCC 33912 / PCC 7942 / FACHB-805) (Anacystis nidulans R2).